A 204-amino-acid chain; its full sequence is Transcriptional regulator GfcR (204 aa).

It belongs to the purine/pyrimidine phosphoribosyltransferase family. GfcR subfamily.

This chain is Transcriptional regulator GfcR, found in Methanoculleus marisnigri (strain ATCC 35101 / DSM 1498 / JR1).